Reading from the N-terminus, the 131-residue chain is MRHRHGLRKLNRTSSHRLAMLRNMTVSLLRHEAIKTTLPKAKELRRVIEPILTLGKTDSLANKRLAFNRLRDREMVVKLFAELGPRYANRNGGYLRILKMGFRVGDNAPMAFVELVDRPDTTEAVEDNSGE.

The protein belongs to the bacterial ribosomal protein bL17 family. As to quaternary structure, part of the 50S ribosomal subunit. Contacts protein L32.

The sequence is that of Large ribosomal subunit protein bL17 from Janthinobacterium sp. (strain Marseille) (Minibacterium massiliensis).